The chain runs to 205 residues: Arginine exporter protein ArgO (205 aa).

The next 6 membrane-spanning stretches (helical) occupy residues 1–21 (MLAV…PLGP), 42–62 (LCAL…SALL), 67–87 (LLLA…GWGA), 111–131 (IIVT…DTFV), 147–167 (WFAF…ALLA), and 182–202 (VINL…ARQG).

Belongs to the LysE/ArgO transporter (TC 2.A.75) family.

The protein resides in the cell inner membrane. The catalysed reaction is L-arginine(in) = L-arginine(out). Involved in the export of arginine. Important to control the intracellular level of arginine and the correct balance between arginine and lysine. This chain is Arginine exporter protein ArgO, found in Yersinia enterocolitica serotype O:8 / biotype 1B (strain NCTC 13174 / 8081).